A 232-amino-acid chain; its full sequence is tRNA (guanine-N(1)-)-methyltransferase (232 aa).

S-adenosyl-L-methionine is bound by residues Gly111 and 131–136 (IGDYIL).

This sequence belongs to the RNA methyltransferase TrmD family. Homodimer.

The protein localises to the cytoplasm. The catalysed reaction is guanosine(37) in tRNA + S-adenosyl-L-methionine = N(1)-methylguanosine(37) in tRNA + S-adenosyl-L-homocysteine + H(+). Functionally, specifically methylates guanosine-37 in various tRNAs. This Bartonella tribocorum (strain CIP 105476 / IBS 506) protein is tRNA (guanine-N(1)-)-methyltransferase.